The sequence spans 353 residues: Holliday junction branch migration complex subunit RuvB (353 aa).

The large ATPase domain (RuvB-L) stretch occupies residues 4–185 (ADRLITAVGG…FGIVQRLEFY (182 aa)). Residues Ile24, Arg25, Gly66, Lys69, Thr70, Thr71, 132–134 (EDF), Arg175, Tyr185, and Arg222 each bind ATP. Thr70 serves as a coordination point for Mg(2+). Residues 186 to 256 (NIADLSTIVA…TADKALNLLD (71 aa)) are small ATPAse domain (RuvB-S). The head domain (RuvB-H) stretch occupies residues 259-353 (EHGFDHQDRR…GEFVDDAADL (95 aa)). DNA contacts are provided by Arg295, Arg314, and Arg319.

Belongs to the RuvB family. Homohexamer. Forms an RuvA(8)-RuvB(12)-Holliday junction (HJ) complex. HJ DNA is sandwiched between 2 RuvA tetramers; dsDNA enters through RuvA and exits via RuvB. An RuvB hexamer assembles on each DNA strand where it exits the tetramer. Each RuvB hexamer is contacted by two RuvA subunits (via domain III) on 2 adjacent RuvB subunits; this complex drives branch migration. In the full resolvosome a probable DNA-RuvA(4)-RuvB(12)-RuvC(2) complex forms which resolves the HJ.

The protein resides in the cytoplasm. It carries out the reaction ATP + H2O = ADP + phosphate + H(+). In terms of biological role, the RuvA-RuvB-RuvC complex processes Holliday junction (HJ) DNA during genetic recombination and DNA repair, while the RuvA-RuvB complex plays an important role in the rescue of blocked DNA replication forks via replication fork reversal (RFR). RuvA specifically binds to HJ cruciform DNA, conferring on it an open structure. The RuvB hexamer acts as an ATP-dependent pump, pulling dsDNA into and through the RuvAB complex. RuvB forms 2 homohexamers on either side of HJ DNA bound by 1 or 2 RuvA tetramers; 4 subunits per hexamer contact DNA at a time. Coordinated motions by a converter formed by DNA-disengaged RuvB subunits stimulates ATP hydrolysis and nucleotide exchange. Immobilization of the converter enables RuvB to convert the ATP-contained energy into a lever motion, pulling 2 nucleotides of DNA out of the RuvA tetramer per ATP hydrolyzed, thus driving DNA branch migration. The RuvB motors rotate together with the DNA substrate, which together with the progressing nucleotide cycle form the mechanistic basis for DNA recombination by continuous HJ branch migration. Branch migration allows RuvC to scan DNA until it finds its consensus sequence, where it cleaves and resolves cruciform DNA. The polypeptide is Holliday junction branch migration complex subunit RuvB (Pseudomonas syringae pv. tomato (strain ATCC BAA-871 / DC3000)).